The sequence spans 410 residues: Peptidase T (410 aa).

Position 79 (H79) interacts with Zn(2+). D81 is a catalytic residue. D142 lines the Zn(2+) pocket. Residue E176 is the Proton acceptor of the active site. Zn(2+)-binding residues include E177, D199, and H381.

The protein belongs to the peptidase M20B family. It depends on Zn(2+) as a cofactor.

The protein resides in the cytoplasm. It catalyses the reaction Release of the N-terminal residue from a tripeptide.. In terms of biological role, cleaves the N-terminal amino acid of tripeptides. The chain is Peptidase T from Bacillus velezensis (strain DSM 23117 / BGSC 10A6 / LMG 26770 / FZB42) (Bacillus amyloliquefaciens subsp. plantarum).